Reading from the N-terminus, the 335-residue chain is 2-acylglycerol O-acyltransferase 1 (335 aa).

2 consecutive transmembrane segments (helical) span residues 24–44 (WVFS…CLVL) and 47–67 (VWLL…TPQA). N-linked (GlcNAc...) asparagine glycans are attached at residues Asn-125 and Asn-180.

It belongs to the diacylglycerol acyltransferase family.

It localises to the endoplasmic reticulum membrane. The enzyme catalyses a 2-acylglycerol + an acyl-CoA = a 1,2-diacylglycerol + CoA. The catalysed reaction is a 2-acylglycerol + an acyl-CoA = a 1,2-diacyl-sn-glycerol + CoA. It catalyses the reaction a 2-acylglycerol + an acyl-CoA = a 2,3-diacyl-sn-glycerol + CoA. It carries out the reaction a 1-acylglycerol + an acyl-CoA = a 1,2-diacylglycerol + CoA. The enzyme catalyses a 1-acylglycerol + an acyl-CoA = a 1,3-diacylglycerol + CoA. The catalysed reaction is a 1-acyl-sn-glycerol + an acyl-CoA = a 1,3-diacyl-sn-glycerol + CoA. It catalyses the reaction a 3-acyl-sn-glycerol + an acyl-CoA = a 1,3-diacyl-sn-glycerol + CoA. Its pathway is glycerolipid metabolism; triacylglycerol biosynthesis. Functionally, involved in glycerolipid synthesis and lipid metabolism. Catalyzes the formation of diacylglycerol, the precursor of triacylglycerol, by transferring the acyl chain of a fatty acyl-CoA to a monoacylglycerol, mainly at the sn-1 or sn-3 positions. It uses both sn-2-monoacylglycerol (2-acylglycerol) and sn-1-monoacylglycerol (1-acyl-sn-glycerol) equally well as substrates, and uses sn-3-monoacylglycerol (3-acyl-sn-glycerol) with lower efficiency. This Xenopus laevis (African clawed frog) protein is 2-acylglycerol O-acyltransferase 1 (mogat1).